The sequence spans 478 residues: UDP-N-acetylmuramate--L-alanine ligase (478 aa).

126 to 132 (GTHGKTT) lines the ATP pocket.

It belongs to the MurCDEF family.

It is found in the cytoplasm. The enzyme catalyses UDP-N-acetyl-alpha-D-muramate + L-alanine + ATP = UDP-N-acetyl-alpha-D-muramoyl-L-alanine + ADP + phosphate + H(+). The protein operates within cell wall biogenesis; peptidoglycan biosynthesis. Its function is as follows. Cell wall formation. This chain is UDP-N-acetylmuramate--L-alanine ligase, found in Synechococcus sp. (strain JA-2-3B'a(2-13)) (Cyanobacteria bacterium Yellowstone B-Prime).